We begin with the raw amino-acid sequence, 624 residues long: Actin-related protein 8 (624 aa).

N-acetylmethionine is present on Met-1. Basic and acidic residues predominate over residues 1–25 (MTQAEKGDTENGKEKGGEKEKEQRG). The disordered stretch occupies residues 1–29 (MTQAEKGDTENGKEKGGEKEKEQRGVKRP). Ser-55 and Thr-56 together coordinate ATP. Ser-132 is modified (phosphoserine). 283–286 (DVGD) contributes to the ATP binding site. A Phosphoserine modification is found at Ser-412. A disordered region spans residues 430–462 (SKQEQSAKATADRKSASKPIGFEGDLRGQSSDL).

It belongs to the actin family. ARP8 subfamily. Component of the chromatin remodeling INO80 complex; specifically part of a complex module associated with the DBINO domain of INO80. Interacts with ACTR5; the interaction is observed in asynchronous (interphase) cells but not in metaphase-arrested cells indicative for a possible dissociation of the INO80 complex in mitotic cells. Exists as monomers and dimers, but the dimer is most probably the biologically relevant form required for stable interactions with histones that exploits the twofold symmetry of the nucleosome core.

The protein resides in the nucleus. It is found in the chromosome. Functionally, plays an important role in the functional organization of mitotic chromosomes. Exhibits low basal ATPase activity, and unable to polymerize. Proposed core component of the chromatin remodeling INO80 complex which is involved in transcriptional regulation, DNA replication and probably DNA repair. Required for the recruitment of INO80 (and probably the INO80 complex) to sites of DNA damage. Strongly prefer nucleosomes and H3-H4 tetramers over H2A-H2B dimers, suggesting it may act as a nucleosome recognition module within the complex. The protein is Actin-related protein 8 (ACTR8) of Homo sapiens (Human).